The sequence spans 78 residues: Large ribosomal subunit protein bL31 (78 aa).

The Zn(2+) site is built by C16, C18, C38, and C41.

The protein belongs to the bacterial ribosomal protein bL31 family. Type A subfamily. As to quaternary structure, part of the 50S ribosomal subunit. The cofactor is Zn(2+).

In terms of biological role, binds the 23S rRNA. The protein is Large ribosomal subunit protein bL31 of Frankia alni (strain DSM 45986 / CECT 9034 / ACN14a).